A 479-amino-acid chain; its full sequence is Integrator complex subunit 12 (479 aa).

A disordered region spans residues Ser-57–Ile-140. Low complexity predominate over residues Lys-70–Ser-90. Positions Thr-91 to Ser-128 are enriched in basic and acidic residues. A PHD-type zinc finger spans residues Gly-161–Gln-217. 3 disordered regions span residues Met-221 to Pro-241, Thr-274 to Gly-293, and Ser-305 to Lys-479. Low complexity-rich tracts occupy residues Gln-223–Thr-239 and Ser-280–Ser-289. The span at Ser-305–Ala-328 shows a compositional bias: polar residues. Positions Ser-354–Gly-364 are enriched in gly residues. A compositionally biased stretch (low complexity) spans Gly-399–Leu-411. A compositionally biased stretch (gly residues) spans Gly-412 to Ser-428. Positions Ala-429–Ala-451 are enriched in low complexity. Positions Gln-466–Lys-479 are enriched in basic residues.

The protein belongs to the Integrator subunit 12 family. Component of the Integrator complex, composed of core subunits INTS1, INTS2, INTS3, INTS4, INTS5, INTS6, INTS7, INTS8, INTS9/RC74, INTS10, INTS11/CPSF3L, INTS12, INTS13, INTS14 and INTS15. The core complex associates with protein phosphatase 2A subunits PPP2CA and PPP2R1A, to form the Integrator-PP2A (INTAC) complex.

The protein localises to the nucleus. Component of the integrator complex, a multiprotein complex that terminates RNA polymerase II (Pol II) transcription in the promoter-proximal region of genes. The integrator complex provides a quality checkpoint during transcription elongation by driving premature transcription termination of transcripts that are unfavorably configured for transcriptional elongation: the complex terminates transcription by (1) catalyzing dephosphorylation of the C-terminal domain (CTD) of Pol II subunit POLR2A/RPB1 and SUPT5H/SPT5, (2) degrading the exiting nascent RNA transcript via endonuclease activity and (3) promoting the release of Pol II from bound DNA. The integrator complex is also involved in terminating the synthesis of non-coding Pol II transcripts, such as enhancer RNAs (eRNAs), small nuclear RNAs (snRNAs), telomerase RNAs and long non-coding RNAs (lncRNAs). This Danio rerio (Zebrafish) protein is Integrator complex subunit 12 (ints12).